A 377-amino-acid chain; its full sequence is Probable multidrug ABC transporter permease YbhS (377 aa).

Residues 1–28 (MSNPILSWRRVRALCVKETRQIVRDPSS) lie on the Cytoplasmic side of the membrane. Residues 29–49 (WLIAVVIPLLLLFIFGYGINL) form a helical membrane-spanning segment. Residues 50–181 (DSSKLRVGIL…WFNPAAISQH (132 aa)) lie on the Periplasmic side of the membrane. The ABC transmembrane type-2 domain maps to 145–375 (IWQIWQMQRA…GLTWLKTKRR (231 aa)). The chain crosses the membrane as a helical span at residues 182–202 (FIIPGAVTIIMTVIGAILTSL). Topologically, residues 203–234 (VVAREWERGTMEALLSTEITRTELLLCKLIPY) are cytoplasmic. Residues 235 to 255 (YFLGMLAMLLCMLVSVFILGV) traverse the membrane as a helical segment. The Periplasmic portion of the chain corresponds to 256–261 (PYRGSL). Residues 262–282 (LILFFISSLFLLSTLGMGLLI) traverse the membrane as a helical segment. Residues 283-291 (STITRNQFN) lie on the Cytoplasmic side of the membrane. A helical membrane pass occupies residues 292-312 (AAQVALNAAFLPSIMLSGFIF). The Periplasmic segment spans residues 313-345 (QIDSMPAVIRAVTYIIPARYFVSTLQSLFLAGN). A helical transmembrane segment spans residues 346-366 (IPVVLVVNVLFLIASAVMFIG). The Cytoplasmic segment spans residues 367–377 (LTWLKTKRRLD).

The protein belongs to the ABC-2 integral membrane protein family. In terms of assembly, the complex is probably composed of two ATP-binding proteins (YbhF) and two transmembrane proteins (YbhR and YbhS).

Its subcellular location is the cell inner membrane. Part of the ABC transporter complex YbhFSR that could be involved in efflux of cefoperazone. Probably involved in the translocation of the substrate across the membrane. The protein is Probable multidrug ABC transporter permease YbhS (ybhS) of Escherichia coli O157:H7.